Here is a 460-residue protein sequence, read N- to C-terminus: MLNGNKCHILLLPCPAQGHINPILQFGKRLASHNLLTTLVNTRFLSNSTKSEPGPVNIQCISDGFDPGGMNAAPSRRAYFDRPQSRSGQKHVGLIESLRSRGRPGACFGLRPVPLWAMNVAERSGLRSVAFFTQPCAVDTIYRHVWEGRIKVPVAEPVRLPGLPPLEPSDLPCVRNGFGRVVNPDLLPLRVNQHKNLDKADMMGRNSIYELEADLLDGSRLPLPVKSIGPTVPSTYLDNRIPSDSHYGFNLYTPDTTPYLDWLDSKAPNSVIYVSFGSLSSLSPDQTNEIASGLIATNKSFIWVVRTSELAKLPANFTQENASRGLVVTWCDQLDLLAHVATGCFVTHCGWNSTMEGVALGVPMVGVPQWSDQPMNAKYVEDVWKVGVRAKTYGKDFVRGEEFKRCVEEVMDGERSGKIRENAARWCKLAKDSVSEGGSSDKCIKEFIHQCCNDSKISLV.

The active-site Proton acceptor is His19. Position 19 (His19) interacts with an anthocyanidin. Positions 133, 333, 348, 351, 352, 353, 356, 372, and 373 each coordinate UDP-alpha-D-glucose.

It belongs to the UDP-glycosyltransferase family. As to expression, mainly expressed in fully developed stigmas.

It carries out the reaction crocetin + UDP-alpha-D-glucose = beta-D-glucosyl crocetin + UDP. The catalysed reaction is beta-D-glucosyl crocetin + UDP-alpha-D-glucose = bis(beta-D-glucosyl) crocetin + UDP. It catalyses the reaction beta-D-gentiobiosyl crocetin + UDP-alpha-D-glucose = beta-D-gentiobiosyl beta-D-glucosyl crocetin + UDP. Functionally, crocetin glucosyltransferase involved in the synthesis of crocin, one of the apocarotenoids responsible for the color and bitter taste of saffron. This is Crocetin glucosyltransferase 2 (GLT2) from Crocus sativus (Saffron).